The sequence spans 192 residues: MAKAYVPRLKKQYDDEIIKAMTEKFGYKNAFEVPKLTKIVLNMGVGEATQDKKKVDQAAAEMELIAGQKPVVTRAKKSIAQFKLREGMPIGVKVTLRRERMFEFLDRFLTIALPRVRDFRGLNPKSFDGRGNYATGIKEQLIFPEISYDQVSTIRGMDVVVATTAKTDEEARELLRLFGFPFPADTTQKKAA.

The protein belongs to the universal ribosomal protein uL5 family. In terms of assembly, part of the 50S ribosomal subunit; part of the 5S rRNA/L5/L18/L25 subcomplex. Contacts the 5S rRNA and the P site tRNA. Forms a bridge to the 30S subunit in the 70S ribosome.

Its function is as follows. This is one of the proteins that bind and probably mediate the attachment of the 5S RNA into the large ribosomal subunit, where it forms part of the central protuberance. In the 70S ribosome it contacts protein S13 of the 30S subunit (bridge B1b), connecting the 2 subunits; this bridge is implicated in subunit movement. Contacts the P site tRNA; the 5S rRNA and some of its associated proteins might help stabilize positioning of ribosome-bound tRNAs. This Zymomonas mobilis subsp. mobilis (strain ATCC 31821 / ZM4 / CP4) protein is Large ribosomal subunit protein uL5.